The following is a 227-amino-acid chain: tRNA (guanine-N(1)-)-methyltransferase (227 aa).

S-adenosyl-L-methionine contacts are provided by residues G111 and 135–140; that span reads LGDYVL.

The protein belongs to the RNA methyltransferase TrmD family. As to quaternary structure, homodimer.

The protein resides in the cytoplasm. It catalyses the reaction guanosine(37) in tRNA + S-adenosyl-L-methionine = N(1)-methylguanosine(37) in tRNA + S-adenosyl-L-homocysteine + H(+). Specifically methylates guanosine-37 in various tRNAs. The protein is tRNA (guanine-N(1)-)-methyltransferase of Leifsonia xyli subsp. xyli (strain CTCB07).